We begin with the raw amino-acid sequence, 160 residues long: SsrA-binding protein (160 aa).

The disordered stretch occupies residues 135–160 (KTHDKRETIKERDWKREQSRILRDRG). Positions 138–160 (DKRETIKERDWKREQSRILRDRG) are enriched in basic and acidic residues.

The protein belongs to the SmpB family.

The protein localises to the cytoplasm. In terms of biological role, required for rescue of stalled ribosomes mediated by trans-translation. Binds to transfer-messenger RNA (tmRNA), required for stable association of tmRNA with ribosomes. tmRNA and SmpB together mimic tRNA shape, replacing the anticodon stem-loop with SmpB. tmRNA is encoded by the ssrA gene; the 2 termini fold to resemble tRNA(Ala) and it encodes a 'tag peptide', a short internal open reading frame. During trans-translation Ala-aminoacylated tmRNA acts like a tRNA, entering the A-site of stalled ribosomes, displacing the stalled mRNA. The ribosome then switches to translate the ORF on the tmRNA; the nascent peptide is terminated with the 'tag peptide' encoded by the tmRNA and targeted for degradation. The ribosome is freed to recommence translation, which seems to be the essential function of trans-translation. This is SsrA-binding protein from Sphingomonas elodea.